The chain runs to 258 residues: Tryptophan synthase alpha chain (258 aa).

Catalysis depends on proton acceptor residues E47 and D58.

It belongs to the TrpA family. Tetramer of two alpha and two beta chains.

The catalysed reaction is (1S,2R)-1-C-(indol-3-yl)glycerol 3-phosphate + L-serine = D-glyceraldehyde 3-phosphate + L-tryptophan + H2O. It functions in the pathway amino-acid biosynthesis; L-tryptophan biosynthesis; L-tryptophan from chorismate: step 5/5. Its function is as follows. The alpha subunit is responsible for the aldol cleavage of indoleglycerol phosphate to indole and glyceraldehyde 3-phosphate. The protein is Tryptophan synthase alpha chain of Bacillus cereus (strain ATCC 10987 / NRS 248).